Consider the following 213-residue polypeptide: Protein big brother (213 aa).

Belongs to the CBF-beta family.

It localises to the nucleus. Functionally, regulates the DNA-binding properties of Runt. The protein is Protein big brother (Bgb) of Drosophila melanogaster (Fruit fly).